The following is a 715-amino-acid chain: Fatty acid oxidation complex subunit alpha (715 aa).

The interval 1–190 is enoyl-CoA hydratase/isomerase; the sequence is MIYEGKAITV…KVGAVDAVVA (190 aa). D297 provides a ligand contact to substrate. Residues 312-715 form a 3-hydroxyacyl-CoA dehydrogenase region; it reads HDVKQAAVLG…MAKNGQRFFN (404 aa). NAD(+) is bound by residues M325, D344, 401–403, K408, and S430; that span reads VVE. H451 serves as the catalytic For 3-hydroxyacyl-CoA dehydrogenase activity. N454 is a binding site for NAD(+). Substrate contacts are provided by N501 and Y660.

It in the N-terminal section; belongs to the enoyl-CoA hydratase/isomerase family. In the C-terminal section; belongs to the 3-hydroxyacyl-CoA dehydrogenase family. Heterotetramer of two alpha chains (FadB) and two beta chains (FadA).

The enzyme catalyses a (3S)-3-hydroxyacyl-CoA + NAD(+) = a 3-oxoacyl-CoA + NADH + H(+). It catalyses the reaction a (3S)-3-hydroxyacyl-CoA = a (2E)-enoyl-CoA + H2O. It carries out the reaction a 4-saturated-(3S)-3-hydroxyacyl-CoA = a (3E)-enoyl-CoA + H2O. The catalysed reaction is (3S)-3-hydroxybutanoyl-CoA = (3R)-3-hydroxybutanoyl-CoA. The enzyme catalyses a (3Z)-enoyl-CoA = a 4-saturated (2E)-enoyl-CoA. It catalyses the reaction a (3E)-enoyl-CoA = a 4-saturated (2E)-enoyl-CoA. It functions in the pathway lipid metabolism; fatty acid beta-oxidation. Its function is as follows. Involved in the aerobic and anaerobic degradation of long-chain fatty acids via beta-oxidation cycle. Catalyzes the formation of 3-oxoacyl-CoA from enoyl-CoA via L-3-hydroxyacyl-CoA. It can also use D-3-hydroxyacyl-CoA and cis-3-enoyl-CoA as substrate. The chain is Fatty acid oxidation complex subunit alpha from Pseudomonas putida (Arthrobacter siderocapsulatus).